The following is a 359-amino-acid chain: Probable cinnamyl alcohol dehydrogenase 8A (359 aa).

Residue cysteine 45 participates in Zn(2+) binding. Threonine 47 is an NADP(+) binding site. Residues histidine 67, glutamate 68, cysteine 98, cysteine 101, cysteine 104, cysteine 112, and cysteine 161 each contribute to the Zn(2+) site. NADP(+) contacts are provided by residues threonine 165, 186–191 (GLGGLG), 209–214 (SSSPAK), threonine 249, glycine 273, and 296–298 (SGG).

This sequence belongs to the zinc-containing alcohol dehydrogenase family. As to quaternary structure, homodimer. The cofactor is Zn(2+).

The catalysed reaction is (E)-cinnamyl alcohol + NADP(+) = (E)-cinnamaldehyde + NADPH + H(+). It carries out the reaction (E)-coniferol + NADP(+) = (E)-coniferaldehyde + NADPH + H(+). It catalyses the reaction (E)-sinapyl alcohol + NADP(+) = (E)-sinapaldehyde + NADPH + H(+). The enzyme catalyses (E)-4-coumaroyl alcohol + NADP(+) = (E)-4-coumaraldehyde + NADPH + H(+). The catalysed reaction is (E)-caffeyl alcohol + NADP(+) = (E)-caffeyl aldehyde + NADPH + H(+). The protein operates within aromatic compound metabolism; phenylpropanoid biosynthesis. Functionally, involved in lignin biosynthesis. Catalyzes the final step specific for the production of lignin monomers. Catalyzes the NADPH-dependent reduction of coniferaldehyde, 5-hydroxyconiferaldehyde, sinapaldehyde, 4-coumaraldehyde and caffeyl aldehyde to their respective alcohols. The sequence is that of Probable cinnamyl alcohol dehydrogenase 8A from Oryza sativa subsp. japonica (Rice).